The chain runs to 242 residues: Probable transcriptional regulatory protein Cphy_2507 (242 aa).

It belongs to the TACO1 family.

It localises to the cytoplasm. This is Probable transcriptional regulatory protein Cphy_2507 from Lachnoclostridium phytofermentans (strain ATCC 700394 / DSM 18823 / ISDg) (Clostridium phytofermentans).